The following is a 117-amino-acid chain: UPF0342 protein LGAS_1451 (117 aa).

It belongs to the UPF0342 family.

The sequence is that of UPF0342 protein LGAS_1451 from Lactobacillus gasseri (strain ATCC 33323 / DSM 20243 / BCRC 14619 / CIP 102991 / JCM 1131 / KCTC 3163 / NCIMB 11718 / NCTC 13722 / AM63).